The following is a 107-amino-acid chain: Integration host factor subunit alpha (107 aa).

Belongs to the bacterial histone-like protein family. In terms of assembly, heterodimer of an alpha and a beta chain.

Functionally, this protein is one of the two subunits of integration host factor, a specific DNA-binding protein that functions in genetic recombination as well as in transcriptional and translational control. This chain is Integration host factor subunit alpha, found in Brucella abortus (strain S19).